Reading from the N-terminus, the 195-residue chain is Protein SYM1 (195 aa).

4 helical membrane passes run 17–39, 59–78, 99–121, and 168–190; these read LITN…QFFF, RAII…WYKF, STLL…PLYY, and PVQF…LSYV.

The protein belongs to the peroxisomal membrane protein PXMP2/4 family.

The protein localises to the mitochondrion inner membrane. Its function is as follows. May be involved in cellular response to stress. Required to maintain mitochondrial DNA (mtDNA) integrity and stability. The sequence is that of Protein SYM1 (SYM1) from Candida albicans (strain SC5314 / ATCC MYA-2876) (Yeast).